Here is a 428-residue protein sequence, read N- to C-terminus: Cyclic AMP-responsive element-binding protein 3-like protein 3-B (428 aa).

Residues 1-286 (MDHYSDQGGD…VMNGSNKPVQ (286 aa)) are Cytoplasmic-facing. Residues 67 to 83 (VSGSPVWSPSPSDSGIS) show a composition bias toward low complexity. The segment at 67-104 (VSGSPVWSPSPSDSGISEDPHSDHIDSPPPNASPPMEP) is disordered. The segment covering 93 to 103 (SPPPNASPPME) has biased composition (pro residues). The bZIP domain occupies 210–273 (ILKKIRRKIR…ISLMEQLRRL (64 aa)). A basic motif region spans residues 212-241 (KKIRRKIRNKQSAQESRKKKKEYIDGLESR). The segment at 252-273 (LQRKVFQLEKCNISLMEQLRRL) is leucine-zipper. A helical; Signal-anchor for type II membrane protein membrane pass occupies residues 287–303 (AGTCVLVLLLSFTLILL). Over 304-428 (PNLKPFTDTK…SRRSPHADDM (125 aa)) the chain is Lumenal. Residues 381-428 (TEYDPESHNHSFDQHDEHHHGDPITGHVATVTLNPRRGSRRSPHADDM) are disordered. Residues 385–402 (PESHNHSFDQHDEHHHGD) show a composition bias toward basic and acidic residues. N389 carries N-linked (GlcNAc...) asparagine glycosylation.

Belongs to the bZIP family. ATF subfamily. Binds DNA as a dimer. In terms of processing, controlled by regulated intramembrane proteolysis (RIP). A fragment containing the cytoplasmic transcription factor domain is released by proteolysis. The cleavage seems to be performed sequentially by site-1 and site-2 proteases.

It localises to the endoplasmic reticulum membrane. The protein localises to the nucleus. Transcriptional activator. Binds the cAMP response element (CRE). Activates transcription through box-B element and CRE. Seems to function synergistically with atf6. Regulates FGF21 transcription. The sequence is that of Cyclic AMP-responsive element-binding protein 3-like protein 3-B (creb3l3b) from Danio rerio (Zebrafish).